The following is a 173-amino-acid chain: Protein tyrosine phosphatase type IVA 1 (173 aa).

Residues 8 to 161 (APVEVTYKNM…YRPKMRLRFK (154 aa)) form the Tyrosine-protein phosphatase domain. An intrachain disulfide couples Cys-49 to Cys-104. Catalysis depends on Asp-72, which acts as the Proton donor. The tract at residues 97-132 (GCCIAVHCVAGLGRAPVLVALALIEGGMKYEDAVQF) is interaction with ATF5. Cys-104 (phosphocysteine intermediate) is an active-site residue. Residue 105 to 110 (VAGLGR) coordinates phosphate. Position 110 (Arg-110) interacts with substrate. Cys-170 carries the post-translational modification Cysteine methyl ester. Cys-170 carries S-farnesyl cysteine lipidation. Residues 171–173 (CIQ) constitute a propeptide, removed in mature form.

The protein belongs to the protein-tyrosine phosphatase family. In terms of assembly, homotrimer. Interacts with ATF5 and tubulin. In terms of processing, farnesylated. Farnesylation is required for membrane targeting.

Its subcellular location is the cell membrane. It localises to the early endosome. The protein localises to the endoplasmic reticulum. The protein resides in the cytoplasm. It is found in the cytoskeleton. Its subcellular location is the spindle. It localises to the nucleus. The enzyme catalyses O-phospho-L-tyrosyl-[protein] + H2O = L-tyrosyl-[protein] + phosphate. Its activity is regulated as follows. Inhibited by sodium orthovanadate and pentamidine. Functionally, protein tyrosine phosphatase which stimulates progression from G1 into S phase during mitosis. May play a role in the development and maintenance of differentiating epithelial tissues. The protein is Protein tyrosine phosphatase type IVA 1 (PTP4A1) of Pongo abelii (Sumatran orangutan).